The following is a 516-amino-acid chain: Cytochrome P450 1A1 (516 aa).

Positions 25 to 36 (FRPQVPKGLKSP) are mitochondrial targeting signal. S63 carries O-linked (GlcNAc) serine glycosylation. Substrate is bound at residue F220. Residue C453 coordinates heme.

The protein belongs to the cytochrome P450 family. As to quaternary structure, interacts with cytosolic chaperones HSP70 and HSP90; this interaction is required for initial targeting to mitochondria. Interacts (via mitochondrial targeting signal) with TOMM40 (via N-terminus); this interaction is required for translocation across the mitochondrial outer membrane. Heme is required as a cofactor. As to expression, constitutively expressed in liver.

It localises to the endoplasmic reticulum membrane. The protein resides in the mitochondrion inner membrane. The protein localises to the microsome membrane. It is found in the cytoplasm. The enzyme catalyses an organic molecule + reduced [NADPH--hemoprotein reductase] + O2 = an alcohol + oxidized [NADPH--hemoprotein reductase] + H2O + H(+). It carries out the reaction estrone + reduced [NADPH--hemoprotein reductase] + O2 = 2-hydroxyestrone + oxidized [NADPH--hemoprotein reductase] + H2O + H(+). It catalyses the reaction estrone + reduced [NADPH--hemoprotein reductase] + O2 = 4-hydroxyestrone + oxidized [NADPH--hemoprotein reductase] + H2O + H(+). The catalysed reaction is estrone + reduced [NADPH--hemoprotein reductase] + O2 = 6alpha-hydroxyestrone + oxidized [NADPH--hemoprotein reductase] + H2O + H(+). The enzyme catalyses estrone + reduced [NADPH--hemoprotein reductase] + O2 = 15alpha-hydroxyestrone + oxidized [NADPH--hemoprotein reductase] + H2O + H(+). It carries out the reaction estrone + reduced [NADPH--hemoprotein reductase] + O2 = 16alpha-hydroxyestrone + oxidized [NADPH--hemoprotein reductase] + H2O + H(+). It catalyses the reaction 17beta-estradiol + reduced [NADPH--hemoprotein reductase] + O2 = 2-hydroxy-17beta-estradiol + oxidized [NADPH--hemoprotein reductase] + H2O + H(+). The catalysed reaction is 17beta-estradiol + reduced [NADPH--hemoprotein reductase] + O2 = 4-hydroxy-17beta-estradiol + oxidized [NADPH--hemoprotein reductase] + H2O + H(+). The enzyme catalyses 17beta-estradiol + reduced [NADPH--hemoprotein reductase] + O2 = 6alpha-hydroxy-17beta-estradiol + oxidized [NADPH--hemoprotein reductase] + H2O + H(+). It carries out the reaction 17beta-estradiol + reduced [NADPH--hemoprotein reductase] + O2 = 7alpha-hydroxy-17beta-estradiol + oxidized [NADPH--hemoprotein reductase] + H2O + H(+). It catalyses the reaction 17beta-estradiol + reduced [NADPH--hemoprotein reductase] + O2 = 15alpha-hydroxy-17beta-estradiol + oxidized [NADPH--hemoprotein reductase] + H2O + H(+). The catalysed reaction is (5Z,8Z,11Z)-eicosatrienoate + reduced [NADPH--hemoprotein reductase] + O2 = 19-hydroxy-(5Z,8Z,11Z)-eicosatrienoate + oxidized [NADPH--hemoprotein reductase] + H2O + H(+). The enzyme catalyses (5Z,8Z,11Z,14Z)-eicosatetraenoate + reduced [NADPH--hemoprotein reductase] + O2 = 16-hydroxy-(5Z,8Z,11Z,14Z)-eicosatetraenoate + oxidized [NADPH--hemoprotein reductase] + H2O + H(+). It carries out the reaction (5Z,8Z,11Z,14Z)-eicosatetraenoate + reduced [NADPH--hemoprotein reductase] + O2 = 17-hydroxy-(5Z,8Z,11Z,14Z)-eicosatetraenoate + oxidized [NADPH--hemoprotein reductase] + H2O + H(+). It catalyses the reaction (5Z,8Z,11Z,14Z)-eicosatetraenoate + reduced [NADPH--hemoprotein reductase] + O2 = 18-hydroxy-(5Z,8Z,11Z,14Z)-eicosatetraenoate + oxidized [NADPH--hemoprotein reductase] + H2O + H(+). The catalysed reaction is (5Z,8Z,11Z,14Z)-eicosatetraenoate + reduced [NADPH--hemoprotein reductase] + O2 = 19-hydroxy-(5Z,8Z,11Z,14Z)-eicosatetraenoate + oxidized [NADPH--hemoprotein reductase] + H2O + H(+). The enzyme catalyses (5Z,8Z,11Z,14Z,17Z)-eicosapentaenoate + reduced [NADPH--hemoprotein reductase] + O2 = 19-hydroxy-(5Z,8Z,11Z,14Z,17Z)-eicosapentaenoate + oxidized [NADPH--hemoprotein reductase] + H2O + H(+). It carries out the reaction (5Z,8Z,11Z,14Z)-eicosatetraenoate + reduced [NADPH--hemoprotein reductase] + O2 = (8R,9S)-epoxy-(5Z,11Z,14Z)-eicosatrienoate + oxidized [NADPH--hemoprotein reductase] + H2O + H(+). It catalyses the reaction (5Z,8Z,11Z,14Z)-eicosatetraenoate + reduced [NADPH--hemoprotein reductase] + O2 = (11R,12S)-epoxy-(5Z,8Z,14Z)-eicosatrienoate + oxidized [NADPH--hemoprotein reductase] + H2O + H(+). The catalysed reaction is (5Z,8Z,11Z,14Z)-eicosatetraenoate + reduced [NADPH--hemoprotein reductase] + O2 = (14S,15R)-epoxy-(5Z,8Z,11Z)-eicosatrienoate + oxidized [NADPH--hemoprotein reductase] + H2O + H(+). The enzyme catalyses (5Z,8Z,11Z,14Z)-eicosatetraenoate + reduced [NADPH--hemoprotein reductase] + O2 = (14R,15S)-epoxy-(5Z,8Z,11Z)-eicosatrienoate + oxidized [NADPH--hemoprotein reductase] + H2O + H(+). It carries out the reaction (5Z,8Z,11Z,14Z,17Z)-eicosapentaenoate + reduced [NADPH--hemoprotein reductase] + O2 = (17R,18S)-epoxy-(5Z,8Z,11Z,14Z)-eicosatetraenoate + oxidized [NADPH--hemoprotein reductase] + H2O + H(+). It catalyses the reaction (4Z,7Z,10Z,13Z,16Z,19Z)-docosahexaenoate + reduced [NADPH--hemoprotein reductase] + O2 = (19S,20R)-epoxy-(4Z,7Z,10Z,13Z,16Z)-docosapentaenoate + oxidized [NADPH--hemoprotein reductase] + H2O + H(+). The catalysed reaction is (4Z,7Z,10Z,13Z,16Z,19Z)-docosahexaenoate + reduced [NADPH--hemoprotein reductase] + O2 = (19R,20S)-epoxy-(4Z,7Z,10Z,13Z,16Z)-docosapentaenoate + oxidized [NADPH--hemoprotein reductase] + H2O + H(+). The enzyme catalyses all-trans-retinol + reduced [NADPH--hemoprotein reductase] + O2 = all-trans-retinal + oxidized [NADPH--hemoprotein reductase] + 2 H2O + H(+). It carries out the reaction all-trans-retinal + reduced [NADPH--hemoprotein reductase] + O2 = all-trans-retinoate + oxidized [NADPH--hemoprotein reductase] + H2O + 2 H(+). It catalyses the reaction (13S)-hydroperoxy-(9Z,11E)-octadecadienoate = 13-oxo-(9Z,11E)-octadecadienoate + H2O. The catalysed reaction is (12S)-hydroperoxy-(5Z,8Z,10E,14Z)-eicosatetraenoate = 12-oxo-(5Z,8Z,10E,14Z)-eicosatetraenoate + H2O. The enzyme catalyses (15S)-hydroperoxy-(5Z,8Z,11Z,13E)-eicosatetraenoate = 15-oxo-(5Z,8Z,11Z,13E)-eicosatetraenoate + H2O. It carries out the reaction (5S)-hydroperoxy-(6E,8Z,11Z,14Z)-eicosatetraenoate = 5-oxo-(6E,8Z,11Z,14Z)-eicosatetraenoate + H2O. It functions in the pathway steroid hormone biosynthesis. The protein operates within lipid metabolism; fatty acid metabolism. It participates in cofactor metabolism; retinol metabolism. Its function is as follows. A cytochrome P450 monooxygenase involved in the metabolism of various endogenous substrates, including fatty acids, steroid hormones and vitamins. Mechanistically, uses molecular oxygen inserting one oxygen atom into a substrate, and reducing the second into a water molecule, with two electrons provided by NADPH via cytochrome P450 reductase (CPR; NADPH-ferrihemoprotein reductase). Catalyzes the hydroxylation of carbon-hydrogen bonds. Exhibits high catalytic activity for the formation of hydroxyestrogens from estrone (E1) and 17beta-estradiol (E2), namely 2-hydroxy E1 and E2, as well as D-ring hydroxylated E1 and E2 at the C15alpha and C16alpha positions. Displays different regioselectivities for polyunsaturated fatty acids (PUFA) hydroxylation. Catalyzes the epoxidation of double bonds of certain PUFA. Converts arachidonic acid toward epoxyeicosatrienoic acid (EET) regioisomers, 8,9-, 11,12-, and 14,15-EET, that function as lipid mediators in the vascular system. Displays an absolute stereoselectivity in the epoxidation of eicosapentaenoic acid (EPA) producing the 17(R),18(S) enantiomer. May play an important role in all-trans retinoic acid biosynthesis in extrahepatic tissues. Catalyzes two successive oxidative transformation of all-trans retinol to all-trans retinal and then to the active form all-trans retinoic acid. May also participate in eicosanoids metabolism by converting hydroperoxide species into oxo metabolites (lipoxygenase-like reaction, NADPH-independent). This Cavia porcellus (Guinea pig) protein is Cytochrome P450 1A1 (CYP1A1).